Here is a 173-residue protein sequence, read N- to C-terminus: Shikimate kinase 1 (173 aa).

14–19 is a binding site for ATP; that stretch reads GAGKST. Ser18 serves as a coordination point for Mg(2+). Substrate is bound by residues Asp36, Arg60, and Gly82. ATP is bound at residue Arg120. Residue Arg140 participates in substrate binding. Gln157 is a binding site for ATP.

Belongs to the shikimate kinase family. In terms of assembly, monomer. The cofactor is Mg(2+).

Its subcellular location is the cytoplasm. It carries out the reaction shikimate + ATP = 3-phosphoshikimate + ADP + H(+). The protein operates within metabolic intermediate biosynthesis; chorismate biosynthesis; chorismate from D-erythrose 4-phosphate and phosphoenolpyruvate: step 5/7. Catalyzes the specific phosphorylation of the 3-hydroxyl group of shikimic acid using ATP as a cosubstrate. In Yersinia pseudotuberculosis serotype O:1b (strain IP 31758), this protein is Shikimate kinase 1.